An 88-amino-acid polypeptide reads, in one-letter code: Cold-regulated protein BLT14 (88 aa).

The sequence is that of Cold-regulated protein BLT14 (BLT14) from Hordeum vulgare (Barley).